The chain runs to 171 residues: Large ribosomal subunit protein bL21 (171 aa).

The tract at residues 144 to 171 is disordered; sequence AAPAKAEAAPKKKAAPKKAAAKTEEGEA. Basic residues predominate over residues 154–163; the sequence is KKKAAPKKAA.

It belongs to the bacterial ribosomal protein bL21 family. As to quaternary structure, part of the 50S ribosomal subunit. Contacts protein L20.

This protein binds to 23S rRNA in the presence of protein L20. This is Large ribosomal subunit protein bL21 from Caulobacter vibrioides (strain ATCC 19089 / CIP 103742 / CB 15) (Caulobacter crescentus).